The chain runs to 359 residues: 3-dehydroquinate synthase (359 aa).

NAD(+) contacts are provided by residues 71–76, 105–109, 129–130, K142, K151, and 169–172; these read DGEAHK, GVIGD, TT, and TLHT. Zn(2+)-binding residues include E184, H247, and H264.

The protein belongs to the sugar phosphate cyclases superfamily. Dehydroquinate synthase family. The cofactor is Co(2+). Zn(2+) is required as a cofactor. NAD(+) serves as cofactor.

The protein resides in the cytoplasm. It catalyses the reaction 7-phospho-2-dehydro-3-deoxy-D-arabino-heptonate = 3-dehydroquinate + phosphate. It functions in the pathway metabolic intermediate biosynthesis; chorismate biosynthesis; chorismate from D-erythrose 4-phosphate and phosphoenolpyruvate: step 2/7. Its function is as follows. Catalyzes the conversion of 3-deoxy-D-arabino-heptulosonate 7-phosphate (DAHP) to dehydroquinate (DHQ). This is 3-dehydroquinate synthase from Neisseria gonorrhoeae (strain ATCC 700825 / FA 1090).